Consider the following 240-residue polypeptide: Glyceraldehyde 3-phosphate phosphatase (240 aa).

This sequence belongs to the HAD-like hydrolase superfamily. Mg(2+) serves as cofactor.

Catalyzes the dephosphorylation of D,L-glyceraldehyde 3-phosphate in vitro. This is Glyceraldehyde 3-phosphate phosphatase from Pyrococcus furiosus (strain ATCC 43587 / DSM 3638 / JCM 8422 / Vc1).